The following is a 79-amino-acid chain: Acyl carrier protein (79 aa).

Residues 2 to 77 (ESIEQRVKKI…QAVDYINSHG (76 aa)) enclose the Carrier domain. Ser-37 bears the O-(pantetheine 4'-phosphoryl)serine mark.

Belongs to the acyl carrier protein (ACP) family. In terms of processing, 4'-phosphopantetheine is transferred from CoA to a specific serine of apo-ACP by AcpS. This modification is essential for activity because fatty acids are bound in thioester linkage to the sulfhydryl of the prosthetic group.

The protein resides in the cytoplasm. Its pathway is lipid metabolism; fatty acid biosynthesis. In terms of biological role, carrier of the growing fatty acid chain in fatty acid biosynthesis. This is Acyl carrier protein from Bordetella parapertussis (strain 12822 / ATCC BAA-587 / NCTC 13253).